A 192-amino-acid chain; its full sequence is Small ribosomal subunit protein eS7 (192 aa).

The protein belongs to the eukaryotic ribosomal protein eS7 family.

This chain is Small ribosomal subunit protein eS7 (RPS7), found in Secale cereale (Rye).